The chain runs to 540 residues: MVVLAAAICTKNGKALLSRQFSEMTKSRVEGLLAAFPKLIGLGRQHTFIETENIRYVYQPLESLYIVLITNKNSNILEDLETLHLLAKLVPEYSNFDEYDISKNAFELIFTFDEVIAMGYKERVTLQQIKHFISMESHEEERFRMEEKIKQKEAQILASSKAKEIERMRHEEMLRGKRSGGYTGISGGGGMGSGGMGSNQYRDNDRDNYHSNNNNNNNNNNNNNNNNNNNRDRDRGDSPNTSRPSAASSGSQGGMILGGKSGTNKNSAIAQVLKEEKIVEKVEDVEQLLDSQISQIPETPTVPQEGVHITVEESFTSFVESDGTVESIDIKGGLSVQINDQSLGKVKVNLKQGKLSKQFQFITHPNIDKALFGEQSVLRLRDGGKGFPSGGILKWRCKTNQESMMPIRVNCWPSPGRDSTTVNLEYDSLVGYELKSVFIVIPNPTSNAPIINQFDGLYEYDNKQKCVIWKIPLIDDSNRQGSMEFSVKGNTQSFFPVKIQFTASQTICDTTVGSVFVEDSNQSTNFSTETTLSVDTYEIK.

The interval 169–263 (RHEEMLRGKR…GMILGGKSGT (95 aa)) is disordered. A compositionally biased stretch (gly residues) spans 179–197 (SGGYTGISGGGGMGSGGMG). Residues 212-229 (NNNNNNNNNNNNNNNNNN) are compositionally biased toward low complexity. Polar residues predominate over residues 238-250 (SPNTSRPSAASSG). The span at 251–261 (SQGGMILGGKS) shows a compositional bias: gly residues. Residues 304-540 (QEGVHITVEE…TLSVDTYEIK (237 aa)) form the MHD domain.

It belongs to the adaptor complexes medium subunit family. Delta-COP subfamily. As to quaternary structure, oligomeric complex that consists of at least the alpha, beta, beta', gamma, delta, epsilon and zeta subunits.

The protein localises to the cytoplasm. The protein resides in the golgi apparatus membrane. It is found in the cytoplasmic vesicle. Its subcellular location is the COPI-coated vesicle membrane. Its function is as follows. The coatomer is a cytosolic protein complex that binds to dilysine motifs and reversibly associates with Golgi non-clathrin-coated vesicles, which further mediate biosynthetic protein transport from the ER, via the Golgi up to the trans Golgi network. Coatomer complex is required for budding from Golgi membranes, and is essential for the retrograde Golgi-to-ER transport of dilysine-tagged proteins. This chain is Coatomer subunit delta (copd), found in Dictyostelium discoideum (Social amoeba).